The following is a 195-amino-acid chain: ATP-dependent Clp protease proteolytic subunit (195 aa).

Residue S99 is the Nucleophile of the active site. H124 is a catalytic residue.

It belongs to the peptidase S14 family. As to quaternary structure, fourteen ClpP subunits assemble into 2 heptameric rings which stack back to back to give a disk-like structure with a central cavity, resembling the structure of eukaryotic proteasomes.

It localises to the cytoplasm. It catalyses the reaction Hydrolysis of proteins to small peptides in the presence of ATP and magnesium. alpha-casein is the usual test substrate. In the absence of ATP, only oligopeptides shorter than five residues are hydrolyzed (such as succinyl-Leu-Tyr-|-NHMec, and Leu-Tyr-Leu-|-Tyr-Trp, in which cleavage of the -Tyr-|-Leu- and -Tyr-|-Trp bonds also occurs).. Functionally, cleaves peptides in various proteins in a process that requires ATP hydrolysis. Has a chymotrypsin-like activity. Plays a major role in the degradation of misfolded proteins. The polypeptide is ATP-dependent Clp protease proteolytic subunit (Carboxydothermus hydrogenoformans (strain ATCC BAA-161 / DSM 6008 / Z-2901)).